Reading from the N-terminus, the 688-residue chain is SRSF protein kinase 2 (688 aa).

The segment at 1–65 (MSVNSEKSSS…EQEDPADYCK (65 aa)) is disordered. Pro residues predominate over residues 22-43 (LVPPPPPPPPPPPPPLPDPTPP). A compositionally biased stretch (acidic residues) spans 44-61 (EPEEEILGSDDEEQEDPA). Ser-52 bears the Phosphoserine mark. Residues 81–684 (YHVIRKLGWG…ASAGECLRHP (604 aa)) enclose the Protein kinase domain. ATP is bound by residues 87 to 95 (LGWGHFSTV) and Lys-110. The Proton acceptor role is filled by Asp-214. Disordered stretches follow at residues 239–277 (WQKAGAPPPSGSAVSTAPQQKPIGKISKNKKKKLKKKQK), 329–444 (GLEE…GRHK), and 469–501 (SVLSEGSPLTEQEESSPSHDRSRTVSASSTGDL). Over residues 265-277 (SKNKKKKLKKKQK) the composition is skewed to basic residues. The residue at position 380 (Ser-380) is a Phosphoserine. Over residues 397–421 (QLDDEDDDEEDCPNPEEYNLDEPNA) the composition is skewed to acidic residues. The span at 423-433 (SDYTYSSSYEQ) shows a compositional bias: polar residues. Ser-475 carries the post-translational modification Phosphoserine. Residue Thr-478 is modified to Phosphothreonine. Ser-484, Ser-486, and Ser-490 each carry phosphoserine. Residue Thr-492 is modified to Phosphothreonine; by PKB/AKT1. Ser-494 and Ser-497 each carry phosphoserine. Residue Ser-588 is modified to Phosphoserine; by CK2.

The protein belongs to the protein kinase superfamily. CMGC Ser/Thr protein kinase family. Associates with U4/U6-U5 tri-small nuclear ribonucleoproteins (U4/U6-U5 tri-snRNPs). Interacts with PKB/AKT1 in a phosphorylation-dependent manner. The phosphorylated form (by PKB/AKT1) interacts with YWHAB and YWHAE. Interaction with YWHAB suppresses its cleavage by caspases and inhibits the release of its N-terminal pro-apoptotic fragment. Interacts with SFN. Interacts with ACIN1. Interacts with POLR2A/RNA polymerase II; the interaction occurs during the co-transcriptional formation of inappropriate R-loops. It depends on Mg(2+) as a cofactor. Post-translationally, phosphorylation at Thr-492 by PKB/AKT1 enhances its stimulatory activity in triggering cyclin-D1 (CCND1) expression and promoting apoptosis in neurons, which can be blocked by YWHAB. It also enhances its protein kinase activity toward ACIN1 and SRSF2, promotes its nuclear translocation and prevents its proteolytic cleavage. In terms of processing, proteolytically cleaved at Asp-139 and Asp-403 by caspase-3 during apoptotic cell death. Cleavage at Asp-139 which is the major site of cleavage, produces a small N-terminal fragment that translocates into nucleus and promotes VP16-induced apoptosis. As to expression, highly expressed in brain, moderately expressed in heart and skeletal muscle and at low levels in lung, liver, and kidney.

Its subcellular location is the cytoplasm. It is found in the nucleus. The protein resides in the nucleoplasm. It localises to the nucleus speckle. The protein localises to the chromosome. It carries out the reaction L-seryl-[protein] + ATP = O-phospho-L-seryl-[protein] + ADP + H(+). The catalysed reaction is L-threonyl-[protein] + ATP = O-phospho-L-threonyl-[protein] + ADP + H(+). Activated by phosphorylation on Ser-52 and Ser-588. Its function is as follows. Serine/arginine-rich protein-specific kinase which specifically phosphorylates its substrates at serine residues located in regions rich in arginine/serine dipeptides, known as RS domains and is involved in the phosphorylation of SR splicing factors and the regulation of splicing. Promotes neuronal apoptosis by up-regulating cyclin-D1 (CCND1) expression. This is done by the phosphorylation of SRSF2, leading to the suppression of p53/TP53 phosphorylation thereby relieving the repressive effect of p53/TP53 on cyclin-D1 (CCND1) expression. Phosphorylates ACIN1, and redistributes it from the nuclear speckles to the nucleoplasm, resulting in cyclin A1 but not cyclin A2 up-regulation. Plays an essential role in spliceosomal B complex formation via the phosphorylation of DDX23/PRP28. Probably by phosphorylating DDX23, leads to the suppression of incorrect R-loops formed during transcription; R-loops are composed of a DNA:RNA hybrid and the associated non-template single-stranded DNA. Can mediate hepatitis B virus (HBV) core protein phosphorylation. Plays a negative role in the regulation of HBV replication through a mechanism not involving the phosphorylation of the core protein but by reducing the packaging efficiency of the pregenomic RNA (pgRNA) without affecting the formation of the viral core particles. The chain is SRSF protein kinase 2 from Homo sapiens (Human).